The sequence spans 220 residues: Flavin-dependent thymidylate synthase (220 aa).

In terms of domain architecture, ThyX spans 1–208; it reads MKIDILDKGF…PWTFEAFLKY (208 aa). FAD is bound by residues Thr-55, 78–80, and Glu-86; that span reads RHR. DUMP contacts are provided by residues 75-78, 86-90, and Arg-147; these read QWFR and ELSGR. The ThyX motif motif lies at 78–88; sequence RHRIASYNELS. FAD-binding positions include 163-165 and Asn-169; that span reads NAR. Arg-174 is a binding site for dUMP. Residue Arg-174 is the Involved in ionization of N3 of dUMP, leading to its activation of the active site.

Belongs to the thymidylate synthase ThyX family. Homotetramer. It depends on FAD as a cofactor.

The enzyme catalyses dUMP + (6R)-5,10-methylene-5,6,7,8-tetrahydrofolate + NADPH + H(+) = dTMP + (6S)-5,6,7,8-tetrahydrofolate + NADP(+). The protein operates within pyrimidine metabolism; dTTP biosynthesis. Its function is as follows. Catalyzes the reductive methylation of 2'-deoxyuridine-5'-monophosphate (dUMP) to 2'-deoxythymidine-5'-monophosphate (dTMP) while utilizing 5,10-methylenetetrahydrofolate (mTHF) as the methyl donor, and NADPH and FADH(2) as the reductant. This chain is Flavin-dependent thymidylate synthase, found in Thermotoga sp. (strain RQ2).